Consider the following 431-residue polypeptide: Metal-binding activator 1 (431 aa).

Positions 1-40 (MILIDDIKYACMECVRGHRSSSCKHHERPLLQVRSKGRPG) form a DNA-binding region, copper-fist. The Zn(2+) site is built by C11, C14, C23, and H25.

The protein resides in the nucleus. In terms of biological role, copper ion-sensing transcription factor which activates transcription of the CTR1 copper transporter under low-copper conditions. Promotes filamentous and invasive growth. The chain is Metal-binding activator 1 (MAC1) from Candida albicans (strain SC5314 / ATCC MYA-2876) (Yeast).